Here is a 330-residue protein sequence, read N- to C-terminus: Beta-ketoacyl-[acyl-carrier-protein] synthase III (330 aa).

Catalysis depends on residues Cys-115 and His-255. The segment at 256–260 (QANFR) is ACP-binding. Residue Asn-285 is part of the active site.

Belongs to the thiolase-like superfamily. FabH family. As to quaternary structure, homodimer.

It localises to the cytoplasm. It carries out the reaction malonyl-[ACP] + acetyl-CoA + H(+) = 3-oxobutanoyl-[ACP] + CO2 + CoA. Its pathway is lipid metabolism; fatty acid biosynthesis. Catalyzes the condensation reaction of fatty acid synthesis by the addition to an acyl acceptor of two carbons from malonyl-ACP. Catalyzes the first condensation reaction which initiates fatty acid synthesis and may therefore play a role in governing the total rate of fatty acid production. Possesses both acetoacetyl-ACP synthase and acetyl transacylase activities. Its substrate specificity determines the biosynthesis of branched-chain and/or straight-chain of fatty acids. This chain is Beta-ketoacyl-[acyl-carrier-protein] synthase III, found in Helicobacter pylori (strain G27).